The sequence spans 282 residues: Pantothenate synthetase (282 aa).

30–37 (MGYLHEGH) contacts ATP. Catalysis depends on H37, which acts as the Proton donor. Q61 provides a ligand contact to (R)-pantoate. Q61 provides a ligand contact to beta-alanine. 147 to 150 (GMKD) provides a ligand contact to ATP. Q153 contacts (R)-pantoate. Residues V176 and 184–187 (KSSR) contribute to the ATP site.

Belongs to the pantothenate synthetase family. In terms of assembly, homodimer.

The protein localises to the cytoplasm. It carries out the reaction (R)-pantoate + beta-alanine + ATP = (R)-pantothenate + AMP + diphosphate + H(+). It participates in cofactor biosynthesis; (R)-pantothenate biosynthesis; (R)-pantothenate from (R)-pantoate and beta-alanine: step 1/1. Its function is as follows. Catalyzes the condensation of pantoate with beta-alanine in an ATP-dependent reaction via a pantoyl-adenylate intermediate. In Bacillus cereus (strain G9842), this protein is Pantothenate synthetase.